Here is a 603-residue protein sequence, read N- to C-terminus: Terpenoid synthase 22 (603 aa).

Mg(2+) is bound by residues Asp-356, Asp-360, Asn-500, and Glu-508. The short motif at Asp-356–Asp-360 is the DDXXD motif element.

The protein belongs to the terpene synthase family. Tpsa subfamily. The cofactor is Mg(2+). Requires Mn(2+) as cofactor. Predominantly expressed in siliques but also in flowers.

The protein localises to the cytoplasm. The protein operates within secondary metabolite biosynthesis; terpenoid biosynthesis. Involved in terpene biosynthesis in roots. Possesses sesquiterpene (C15) synthase activity in vitro. Does not seem to be involved in diterpene (C20) biosynthesis. This chain is Terpenoid synthase 22, found in Arabidopsis thaliana (Mouse-ear cress).